A 167-amino-acid chain; its full sequence is uncharacterized protein (167 aa).

This is an uncharacterized protein from Escherichia coli (strain K12).